The sequence spans 233 residues: Mediator of RNA polymerase II transcription subunit 8 (233 aa).

The disordered stretch occupies residues 204–233 (RGEVDRGSSSQEGLSTNNEQSGDKDIIMAD). The span at 210 to 223 (GSSSQEGLSTNNEQ) shows a compositional bias: polar residues. Positions 224–233 (SGDKDIIMAD) are enriched in basic and acidic residues.

Belongs to the Mediator complex subunit 8 family. As to quaternary structure, component of the Mediator complex.

The protein resides in the nucleus. Functionally, component of the Mediator complex, a coactivator involved in the regulated transcription of nearly all RNA polymerase II-dependent genes. Mediator functions as a bridge to convey information from gene-specific regulatory proteins to the basal RNA polymerase II transcription machinery. Mediator is recruited to promoters by direct interactions with regulatory proteins and serves as a scaffold for the assembly of a functional preinitiation complex with RNA polymerase II and the general transcription factors. In Candida glabrata (strain ATCC 2001 / BCRC 20586 / JCM 3761 / NBRC 0622 / NRRL Y-65 / CBS 138) (Yeast), this protein is Mediator of RNA polymerase II transcription subunit 8 (MED8).